A 208-amino-acid chain; its full sequence is Calcyphosin-like protein (208 aa).

EF-hand domains lie at 39–74, 75–110, 111–146, and 154–191; these read AGIKGLGRVFRIMDDNNNRTLDFKEFLKGLNDYAVV, MEKEEAEELFQRFDRDGSGTIDFNEFLLTLRPPMSR, ARKEVIMKAFRKLDKTGDGVITIEDLREVYNAKHHP, and TEEQVFRKFLDNFDSPYDKDGLVTPEEFMNYYAGVSAS. Ca(2+) is bound by residues aspartate 52, asparagine 54, asparagine 56, threonine 58, glutamate 63, aspartate 88, aspartate 90, serine 92, threonine 94, and glutamate 99.

Its subcellular location is the cytoplasm. This chain is Calcyphosin-like protein (Capsl), found in Mus musculus (Mouse).